The chain runs to 55 residues: Hydrophobic protein LTI6B (55 aa).

Helical transmembrane passes span 8–28 (IDILIAIILPPLGVFLKFGCG) and 31–51 (FWICLLLTFLGYIPGIIYAIY).

This sequence belongs to the UPF0057 (PMP3) family.

It localises to the membrane. In terms of biological role, plays a role in the regulation of membrane potential. Could mediate a proton leak. The chain is Hydrophobic protein LTI6B (LTI6B) from Oryza sativa subsp. indica (Rice).